A 125-amino-acid chain; its full sequence is Small ribosomal subunit protein uS13 (125 aa).

The segment at 90–125 is disordered; sequence TRHRRGLPVRGQRTHTNARTKKGPRRAIAGKKKVTK.

The protein belongs to the universal ribosomal protein uS13 family. Part of the 30S ribosomal subunit. Forms a loose heterodimer with protein S19. Forms two bridges to the 50S subunit in the 70S ribosome.

Located at the top of the head of the 30S subunit, it contacts several helices of the 16S rRNA. In the 70S ribosome it contacts the 23S rRNA (bridge B1a) and protein L5 of the 50S subunit (bridge B1b), connecting the 2 subunits; these bridges are implicated in subunit movement. Contacts the tRNAs in the A and P-sites. The protein is Small ribosomal subunit protein uS13 of Gemmatimonas aurantiaca (strain DSM 14586 / JCM 11422 / NBRC 100505 / T-27).